The chain runs to 424 residues: UPF0229 protein PputGB1_0427 (424 aa).

Residues 81 to 107 (EFTAGEHIPRPQGGGGGGGGRGKAGNS) form a disordered region. The span at 92–107 (QGGGGGGGGRGKAGNS) shows a compositional bias: gly residues.

Belongs to the UPF0229 family.

This is UPF0229 protein PputGB1_0427 from Pseudomonas putida (strain GB-1).